Consider the following 440-residue polypeptide: Xylose isomerase (440 aa).

Active-site residues include H100 and D103. Mg(2+) contacts are provided by E231, E267, H270, D295, D306, D308, and D338.

The protein belongs to the xylose isomerase family. As to quaternary structure, homotetramer. The cofactor is Mg(2+).

It localises to the cytoplasm. It catalyses the reaction alpha-D-xylose = alpha-D-xylulofuranose. This Burkholderia cenocepacia (strain ATCC BAA-245 / DSM 16553 / LMG 16656 / NCTC 13227 / J2315 / CF5610) (Burkholderia cepacia (strain J2315)) protein is Xylose isomerase.